Reading from the N-terminus, the 590-residue chain is UvrABC system protein C (590 aa).

One can recognise a GIY-YIG domain in the interval 14–91; it reads EQPGCYLMKD…IKKHDPKYNV (78 aa). A UVR domain is found at 196 to 231; sequence EDVKRELAEKMHEAAETLEFERAKEYRDQIAAIEMT.

The protein belongs to the UvrC family. As to quaternary structure, interacts with UvrB in an incision complex.

It is found in the cytoplasm. In terms of biological role, the UvrABC repair system catalyzes the recognition and processing of DNA lesions. UvrC both incises the 5' and 3' sides of the lesion. The N-terminal half is responsible for the 3' incision and the C-terminal half is responsible for the 5' incision. In Geobacillus kaustophilus (strain HTA426), this protein is UvrABC system protein C.